A 314-amino-acid polypeptide reads, in one-letter code: 2,3-dihydroxyphenylpropionate/2,3-dihydroxicinnamic acid 1,2-dioxygenase 2 (314 aa).

His115 (proton donor) is an active-site residue. The active-site Proton acceptor is His179.

The protein belongs to the LigB/MhpB extradiol dioxygenase family. Homotetramer. It depends on Fe(2+) as a cofactor.

It catalyses the reaction 3-(2,3-dihydroxyphenyl)propanoate + O2 = (2Z,4E)-2-hydroxy-6-oxonona-2,4-dienedioate + H(+). The catalysed reaction is (2E)-3-(2,3-dihydroxyphenyl)prop-2-enoate + O2 = (2Z,4E,7E)-2-hydroxy-6-oxonona-2,4,7-trienedioate + H(+). It functions in the pathway aromatic compound metabolism; 3-phenylpropanoate degradation. Functionally, catalyzes the non-heme iron(II)-dependent oxidative cleavage of 2,3-dihydroxyphenylpropionic acid and 2,3-dihydroxicinnamic acid into 2-hydroxy-6-ketononadienedioate and 2-hydroxy-6-ketononatrienedioate, respectively. The chain is 2,3-dihydroxyphenylpropionate/2,3-dihydroxicinnamic acid 1,2-dioxygenase 2 (mhpB2) from Pseudomonas putida (Arthrobacter siderocapsulatus).